The following is a 140-amino-acid chain: Iron sulfur cluster assembly protein 1 (140 aa).

Belongs to the NifU family. In terms of assembly, component of the core Fe-S cluster (ISC) assembly machinery. [2Fe-2S] cluster is required as a cofactor.

The protein resides in the mitosome matrix. The protein operates within cofactor biosynthesis; iron-sulfur cluster biosynthesis. In terms of biological role, scaffold protein for the de novo synthesis of iron-sulfur (Fe-S) clusters within mitosomes, which is required for maturation of both [2Fe-2S] and [4Fe-4S] proteins. First, a [2Fe-2S] cluster is transiently assembled on the scaffold protein ISU1. In a second step, the cluster is released from ISU1, transferred to a glutaredoxin, followed by the formation of [2Fe-2S] proteins, the synthesis of [4Fe-4S] clusters and their target-specific insertion into the recipient apoproteins. Cluster assembly on ISU1 depends on the function of the cysteine desulfurase complex NFS1-ISD11, which serves as the sulfur donor for cluster synthesis, the iron-binding protein frataxin as the putative iron donor, and the electron transfer chain comprised of ferredoxin reductase and ferredoxin, which receive their electrons from NADH. This Encephalitozoon cuniculi (strain GB-M1) (Microsporidian parasite) protein is Iron sulfur cluster assembly protein 1 (ISU1).